The sequence spans 548 residues: Glucose-6-phosphate isomerase (548 aa).

Glu354 acts as the Proton donor in catalysis. Active-site residues include His385 and Lys513.

Belongs to the GPI family.

The protein resides in the cytoplasm. It carries out the reaction alpha-D-glucose 6-phosphate = beta-D-fructose 6-phosphate. The protein operates within carbohydrate biosynthesis; gluconeogenesis. Its pathway is carbohydrate degradation; glycolysis; D-glyceraldehyde 3-phosphate and glycerone phosphate from D-glucose: step 2/4. Functionally, catalyzes the reversible isomerization of glucose-6-phosphate to fructose-6-phosphate. The chain is Glucose-6-phosphate isomerase from Marinomonas sp. (strain MWYL1).